A 646-amino-acid polypeptide reads, in one-letter code: Secretogranin-1 (646 aa).

A signal peptide spans 1–20; it reads MQPAALLGLLGATVVAAVSS. Cys-36 and Cys-57 are joined by a disulfide. Residues 67-90 are compositionally biased toward basic and acidic residues; the sequence is ELKNEEKSENENTRFEVRLLRDPA. Residues 67–483 are disordered; that stretch reads ELKNEEKSEN…GKQYAPHHIT (417 aa). Position 74 is a phosphoserine (Ser-74). Thr-79 and Thr-92 each carry phosphothreonine. Phosphoserine occurs at positions 93, 99, 100, and 104. O-linked (Xyl...) (chondroitin sulfate) serine glycosylation is present at Ser-93. Residue Thr-113 is glycosylated (O-linked (GalNAc...) threonine). Basic and acidic residues-rich tracts occupy residues 119 to 128 and 137 to 173; these read SGGHSRERAG and KEAK…ERLS. Phosphoserine occurs at positions 123, 146, and 168. The span at 182–191 shows a compositional bias: polar residues; sequence AFLNQRNQTP. An O-linked (GalNAc...) threonine glycan is attached at Thr-190. Position 205 is a phosphoserine (Ser-205). The span at 208–228 shows a compositional bias: basic and acidic residues; sequence GLEKSHSRERSSQESGEETKS. Ser-222 carries O-linked (Xyl...) (chondroitin sulfate) serine glycosylation. A compositionally biased stretch (basic residues) spans 260–270; it reads RHSRPRHHHGR. Ser-276, Ser-277, and Ser-295 each carry phosphoserine. Tyr-315 carries the sulfotyrosine modification. Positions 340 to 361 are enriched in basic and acidic residues; sequence GRGEHQALRRPSEESLEQENKR. Phosphoserine occurs at positions 351 and 354. Tyr-374 is subject to Phosphotyrosine. 2 positions are modified to phosphoserine: Ser-375 and Ser-378. Over residues 406-425 the composition is skewed to basic and acidic residues; it reads TDEKRFLGETHHRVQESQRD. Tyr-441 is modified (sulfotyrosine). Basic and acidic residues-rich tracts occupy residues 442 to 451 and 459 to 472; these read GEEKGEEAAR and DPRD…EARL. Gln-476 bears the Pyrrolidone carboxylic acid; in secretogranin-1(476-566) mark. Residues Ser-502, Ser-503, and Ser-514 each carry the phosphoserine modification. Position 535 is a sulfotyrosine (Tyr-535). Residue Gln-567 is modified to Pyrrolidone carboxylic acid; in peptide BAM-1745. Ser-584 carries the phosphoserine modification. The interval 588–620 is disordered; that stretch reads PDFYDSEEQMSPQHTAENEEEKAGQGVLTEEEE. Tyr-591 bears the Sulfotyrosine mark. Phosphoserine occurs at positions 593 and 598. Position 634 is a pyrrolidone carboxylic acid; in Secretolytin; partial (Gln-634).

Belongs to the chromogranin/secretogranin protein family. Interacts with ITPR1 in the secretory granules. In terms of processing, O-glycosylated by the trisaccharide, GalNAc-Gal-NeuAc, on 2 sites in the N-terminal. May be glycated. Post-translationally, extensively phosphorylated. Differentially processed on numerous sites throughout the sequence depending on tissue type.

It localises to the cytoplasmic vesicle. The protein resides in the secretory vesicle membrane. Its subcellular location is the secreted. In terms of biological role, secretogranin-1 is a neuroendocrine secretory granule protein, which may be the precursor for other biologically active peptides. The 16 pairs of basic AA distributed throughout its sequence may be used as proteolytic cleavage sites. Functionally, secretolytin has antibacterial activity. The sequence is that of Secretogranin-1 (CHGB) from Bos taurus (Bovine).